A 338-amino-acid chain; its full sequence is Protein UL141 (338 aa).

A signal peptide spans 1-25 (MCRRESLRTLPWLFWVLLSCPRLLE). Residues 37-278 (DIAEKMWAEN…DTGMSPWATR (242 aa)) lie on the Extracellular side of the membrane. Residues N117, N132, and N147 are each glycosylated (N-linked (GlcNAc...) asparagine; by host). Residues 279–299 (GIAAFLGFWSIFTVCFLCYLC) form a helical membrane-spanning segment. The Cytoplasmic portion of the chain corresponds to 300 to 338 (YLQCCGHWCPTPGRGRRGGEGYRRLPTYDSYPGVKKMKR).

Interacts with human PVR. Interacts with human TNFRSF10A and TNFRSF10B. Forms a homodimer that engages two TNFRSF10B monomers.

It is found in the host endoplasmic reticulum membrane. Evasion of NK cell killing. Blocks surface expression of PVR which is a ligand for NK cell-activating receptors. Binds human PVR in the endoplasmic reticulum and prevents its maturation and transport to the cell surface. Targets also the natural killer cell activating ligand NECTIN2 for proteasome-mediated degradation. Additionally promotes intracellular retention of TNFRSF10A/TRAIL-R1 and TNFRSF10B/TRAIL-R2 and thus down-regulates their cell surface expression. The polypeptide is Protein UL141 (UL141) (Human cytomegalovirus (strain Merlin) (HHV-5)).